The sequence spans 330 residues: L-tryptophan isonitrile synthase AmbI2 (330 aa).

This sequence belongs to the isocyanide synthase family.

The enzyme catalyses D-ribulose 5-phosphate + L-tryptophan = (2S)-3-(1H-indol-3-yl)-2-isocyanopropanoate + hydroxyacetone + formaldehyde + phosphate + H2O + H(+). Functionally, involved in the biosynthesis of ambiguines, a family of hapalindole-type alkaloids. Responsible for the synthesis of the isonitrile group on tryptophan using ribulose 5-phosphate as the source of the carbon atom. The protein is L-tryptophan isonitrile synthase AmbI2 of Fischerella ambigua (strain UTEX 1903).